We begin with the raw amino-acid sequence, 352 residues long: Heat-inducible transcription repressor HrcA (352 aa).

The protein belongs to the HrcA family.

Its function is as follows. Negative regulator of class I heat shock genes (grpE-dnaK-dnaJ and groELS operons). Prevents heat-shock induction of these operons. The chain is Heat-inducible transcription repressor HrcA from Latilactobacillus sakei subsp. sakei (strain 23K) (Lactobacillus sakei subsp. sakei).